Consider the following 1099-residue polypeptide: Solute carrier family 38 member 10 (1099 aa).

A run of 10 helical transmembrane segments spans residues 9-31 (WGLV…PFCF), 36-58 (IVLG…MFLV), 84-104 (LVET…YVVI), 123-143 (TFRV…LSLQ), 153-173 (FSAM…LSSF), 229-249 (IFAS…FFGY), 272-292 (MIRV…ILPC), 323-343 (VLTL…PNVE), 345-365 (ILGF…PALI), and 378-398 (VVLW…LSVS). 2 disordered regions span residues 440–679 (DSQE…EEAG) and 720–1047 (EIRQ…LAPK). Ser441 carries the phosphoserine modification. 5 stretches are compositionally biased toward basic and acidic residues: residues 441 to 454 (SQEK…KEVL), 493 to 508 (EAHR…KVVV), 517 to 528 (PEEKKPPPKLPD), 544 to 561 (ESEK…KRPE), and 586 to 599 (PRKE…RDLH). A phosphoserine mark is found at Ser607 and Ser635. Composition is skewed to basic and acidic residues over residues 653–663 (EAAEQREKNEA), 720–735 (EIRQ…KPKP), and 749–766 (GQEE…HAGE). Positions 698–734 (VQQKRLLDQQEKLLAVIEEQHKEIRQQRQEGEEDKPK) form a coiled coil. Thr767 is modified (phosphothreonine). Composition is skewed to basic and acidic residues over residues 793–802 (KGQHPLEEVK), 852–894 (EPVH…ETGK), 917–928 (EDSHSKSRHSEP), 957–969 (KSQD…RSEG), and 1010–1022 (QKPE…RDLK). Ser886 carries the post-translational modification Phosphoserine.

The protein belongs to the amino acid/polyamine transporter 2 family. As to expression, only expressed in the pituitary, adrenal gland, stomach and in the upper gastrointestinal tract.

The protein resides in the membrane. The enzyme catalyses L-glutamate(out) = L-glutamate(in). The catalysed reaction is L-glutamine(out) = L-glutamine(in). It carries out the reaction L-alanine(in) = L-alanine(out). It catalyses the reaction L-serine(in) = L-serine(out). The enzyme catalyses L-leucine(in) = L-leucine(out). Its function is as follows. Facilitates bidirectional transport of amino acids. May act as a glutamate sensor that regulates glutamate-glutamine cycle and mTOR signaling in the brain. The transport mechanism remains to be elucidated. The polypeptide is Solute carrier family 38 member 10 (Rattus norvegicus (Rat)).